Consider the following 328-residue polypeptide: tRNA uridine(34) hydroxylase (328 aa).

One can recognise a Rhodanese domain in the interval 130 to 224; it reads LDEDTVVLDT…YGKDPEVQGE (95 aa). C184 functions as the Cysteine persulfide intermediate in the catalytic mechanism.

This sequence belongs to the TrhO family.

It carries out the reaction uridine(34) in tRNA + AH2 + O2 = 5-hydroxyuridine(34) in tRNA + A + H2O. In terms of biological role, catalyzes oxygen-dependent 5-hydroxyuridine (ho5U) modification at position 34 in tRNAs. The protein is tRNA uridine(34) hydroxylase of Streptococcus sanguinis (strain SK36).